The sequence spans 282 residues: Pantothenate synthetase (282 aa).

26–33 (MGNLHEGH) lines the ATP pocket. The active-site Proton donor is the His33. Gln57 is a (R)-pantoate binding site. Gln57 is a binding site for beta-alanine. ATP is bound at residue 144 to 147 (GKKD). Gln150 is a (R)-pantoate binding site. Residues Ile173 and 181-184 (LSSR) each bind ATP.

The protein belongs to the pantothenate synthetase family. In terms of assembly, homodimer.

The protein resides in the cytoplasm. It carries out the reaction (R)-pantoate + beta-alanine + ATP = (R)-pantothenate + AMP + diphosphate + H(+). It participates in cofactor biosynthesis; (R)-pantothenate biosynthesis; (R)-pantothenate from (R)-pantoate and beta-alanine: step 1/1. Its function is as follows. Catalyzes the condensation of pantoate with beta-alanine in an ATP-dependent reaction via a pantoyl-adenylate intermediate. This chain is Pantothenate synthetase, found in Cupriavidus necator (strain ATCC 17699 / DSM 428 / KCTC 22496 / NCIMB 10442 / H16 / Stanier 337) (Ralstonia eutropha).